We begin with the raw amino-acid sequence, 250 residues long: Triosephosphate isomerase (250 aa).

Position 9 to 11 (9 to 11 (NWK)) interacts with substrate. His-94 functions as the Electrophile in the catalytic mechanism. Glu-165 (proton acceptor) is an active-site residue. Substrate contacts are provided by residues Gly-171, Ser-211, and 232–233 (GG).

This sequence belongs to the triosephosphate isomerase family. In terms of assembly, homodimer.

It localises to the cytoplasm. The enzyme catalyses D-glyceraldehyde 3-phosphate = dihydroxyacetone phosphate. The protein operates within carbohydrate biosynthesis; gluconeogenesis. Its pathway is carbohydrate degradation; glycolysis; D-glyceraldehyde 3-phosphate from glycerone phosphate: step 1/1. In terms of biological role, involved in the gluconeogenesis. Catalyzes stereospecifically the conversion of dihydroxyacetone phosphate (DHAP) to D-glyceraldehyde-3-phosphate (G3P). The sequence is that of Triosephosphate isomerase from Alkalilimnicola ehrlichii (strain ATCC BAA-1101 / DSM 17681 / MLHE-1).